The sequence spans 371 residues: 3-dehydroquinate synthase (371 aa).

NAD(+) is bound by residues 72–77, 106–110, 130–131, Lys-143, Lys-152, and 170–173; these read DGEEHK, GVVGD, TT, and TLKT. Glu-185, His-248, and His-265 together coordinate Zn(2+).

The protein belongs to the sugar phosphate cyclases superfamily. Dehydroquinate synthase family. Requires Co(2+) as cofactor. The cofactor is Zn(2+). NAD(+) is required as a cofactor.

The protein localises to the cytoplasm. It catalyses the reaction 7-phospho-2-dehydro-3-deoxy-D-arabino-heptonate = 3-dehydroquinate + phosphate. Its pathway is metabolic intermediate biosynthesis; chorismate biosynthesis; chorismate from D-erythrose 4-phosphate and phosphoenolpyruvate: step 2/7. In terms of biological role, catalyzes the conversion of 3-deoxy-D-arabino-heptulosonate 7-phosphate (DAHP) to dehydroquinate (DHQ). The polypeptide is 3-dehydroquinate synthase (Pelotomaculum thermopropionicum (strain DSM 13744 / JCM 10971 / SI)).